We begin with the raw amino-acid sequence, 1683 residues long: Phospholipase D1 (1683 aa).

4 disordered regions span residues 1 to 150, 173 to 198, 259 to 289, and 384 to 416; these read MSNV…AYTQ, LKSS…QQVN, ILDI…SIPR, and VMEK…NITS. At S2 the chain carries N-acetylserine. Residues S8 and S30 each carry the phosphoserine modification. Composition is skewed to basic and acidic residues over residues 20 to 34, 63 to 82, and 90 to 112; these read SVTE…RPDE, NGKE…DRNL, and SLDH…ENMH. Low complexity predominate over residues 116–125; that stretch reads NNLHSSNNNV. A compositionally biased stretch (polar residues) spans 141 to 150; sequence RRSSSVAYTQ. S145 bears the Phosphoserine mark. Low complexity predominate over residues 263-279; sequence TNSNHNHRGNNNNNTGE. One can recognise a PX domain in the interval 291 to 487; that stretch reads SSIISISSNV…EFYELSPLGN (197 aa). A compositionally biased stretch (polar residues) spans 392–404; that stretch reads KPSSAASAPHTSE. A compositionally biased stretch (low complexity) spans 405-416; sequence NNNNDNGSNITS. The PH domain maps to 496–664; that stretch reads QGKQGYLVIR…SSIIKMSTST (169 aa). 2 PLD phosphodiesterase domains span residues 791–818 and 1091–1118; these read YFWA…CYGR and EQLY…NERS. Residues H796, K798, D803, H1096, K1098, and D1103 contribute to the active site. A disordered region spans residues 1430–1465; sequence KDMRRHLSSSTESTRNGSNSLPLNEKSNEGESTNVD. Residues 1437 to 1451 are compositionally biased toward polar residues; the sequence is SSSTESTRNGSNSLP. S1461 bears the Phosphoserine mark. At T1462 the chain carries Phosphothreonine.

It belongs to the phospholipase D family. As to quaternary structure, interacts with SRF1.

It carries out the reaction a 1,2-diacyl-sn-glycero-3-phosphocholine + H2O = a 1,2-diacyl-sn-glycero-3-phosphate + choline + H(+). Its activity is regulated as follows. Activity is dependent of phosphatidylinositol 4,5-bisphosphate and the regulator SRF1. Inhibited by magnesium. Required for meiosis and spore formation. Seems to be involved in the coordinate induction of late meiotic events. PLD activity is induced under sporulation conditions and seems to be necessary to complete the meiotic cycle, but not for vegetative cell growth. This is Phospholipase D1 (SPO14) from Saccharomyces cerevisiae (strain ATCC 204508 / S288c) (Baker's yeast).